A 438-amino-acid polypeptide reads, in one-letter code: Glycosyl hydrolase family 109 protein (438 aa).

Residues 1–33 constitute a signal peptide (tat-type signal); the sequence is MDKTSRRDLLKLASLAGIGAGLARSQGSSKSMA. Residues 52 to 53, Asp74, 125 to 128, 145 to 146, and Asn174 contribute to the NAD(+) site; these read GR, WVWH, and EV. Residues Tyr203, Arg221, 233–236, and Tyr315 contribute to the substrate site; that span reads YPTH. NAD(+) is bound at residue Tyr233. The disordered stretch occupies residues 408–438; the sequence is GPLSEASVANGSAPQKFPDFTRGKWQTRQPV.

The protein belongs to the Gfo/Idh/MocA family. Glycosyl hydrolase 109 subfamily. The cofactor is NAD(+). Predicted to be exported by the Tat system. The position of the signal peptide cleavage has not been experimentally proven.

Glycosidase. The chain is Glycosyl hydrolase family 109 protein from Solibacter usitatus (strain Ellin6076).